Reading from the N-terminus, the 132-residue chain is MPTINQLVRKGREKVRKKSKVPALKGAPFRRGVCTVVRTVTPKKPNSALRKVAKVRLTSGYEVTAYIPGEGHNLQEHSVVLIRGGRVKDLPGVRYHIVRGVYDAAGVKDRKKSRSKYGTKKPKEAAKTAAKK.

Asp-89 carries the 3-methylthioaspartic acid modification. Residues 106-132 (GVKDRKKSRSKYGTKKPKEAAKTAAKK) form a disordered region. Residues 109-120 (DRKKSRSKYGTK) are compositionally biased toward basic residues.

The protein belongs to the universal ribosomal protein uS12 family. In terms of assembly, part of the 30S ribosomal subunit. Contacts proteins S8 and S17. May interact with IF1 in the 30S initiation complex.

With S4 and S5 plays an important role in translational accuracy. Its function is as follows. Interacts with and stabilizes bases of the 16S rRNA that are involved in tRNA selection in the A site and with the mRNA backbone. Located at the interface of the 30S and 50S subunits, it traverses the body of the 30S subunit contacting proteins on the other side and probably holding the rRNA structure together. The combined cluster of proteins S8, S12 and S17 appears to hold together the shoulder and platform of the 30S subunit. The chain is Small ribosomal subunit protein uS12 (rpsL) from Thermus thermophilus (strain ATCC BAA-163 / DSM 7039 / HB27).